We begin with the raw amino-acid sequence, 622 residues long: Chaperone protein HscA homolog (622 aa).

This sequence belongs to the heat shock protein 70 family.

In terms of biological role, chaperone involved in the maturation of iron-sulfur cluster-containing proteins. Has a low intrinsic ATPase activity which is markedly stimulated by HscB. The sequence is that of Chaperone protein HscA homolog from Aromatoleum aromaticum (strain DSM 19018 / LMG 30748 / EbN1) (Azoarcus sp. (strain EbN1)).